Consider the following 148-residue polypeptide: NADPH-dependent 7-cyano-7-deazaguanine reductase (148 aa).

The Thioimide intermediate role is filled by Cys-50. Asp-57 (proton donor) is an active-site residue. Substrate-binding positions include 72–74 (VES) and 91–92 (HE).

The protein belongs to the GTP cyclohydrolase I family. QueF type 1 subfamily.

The protein resides in the cytoplasm. The catalysed reaction is 7-aminomethyl-7-carbaguanine + 2 NADP(+) = 7-cyano-7-deazaguanine + 2 NADPH + 3 H(+). It participates in tRNA modification; tRNA-queuosine biosynthesis. Its function is as follows. Catalyzes the NADPH-dependent reduction of 7-cyano-7-deazaguanine (preQ0) to 7-aminomethyl-7-deazaguanine (preQ1). The chain is NADPH-dependent 7-cyano-7-deazaguanine reductase from Helicobacter pylori (strain G27).